Consider the following 1129-residue polypeptide: A-kinase anchor protein 11 (1129 aa).

The segment covering 1–12 has biased composition (basic residues); the sequence is MQKMQCHLRRPL. Residues 1 to 21 form a disordered region; it reads MQKMQCHLRRPLHSSSSFSSQ. A phosphothreonine mark is found at T251 and T363. 3 disordered regions span residues 354–376, 394–416, and 434–455; these read IRDR…QTSS, EFAP…SENE, and SEEV…SEHS. A compositionally biased stretch (polar residues) spans 404–416; that stretch reads PHNSSVGSLSENE. 3 positions are modified to phosphoserine: S434, S439, and S440. Basic and acidic residues predominate over residues 442-455; that stretch reads GEEHPEMDVKSEHS. S595 carries the post-translational modification Phosphoserine. A Phosphothreonine modification is found at T742. S835 carries the phosphoserine modification. The tract at residues 905 to 918 is PKA-RII binding region; the sequence is LAEKIVAEAIEKAE. The tract at residues 962–1061 is disordered; sequence SKEVEDFQST…QEDGAEGLQP (100 aa). A compositionally biased stretch (polar residues) spans 968–995; the sequence is FQSTESLGSQQMNLSVGEDSTGSWSNLS. Positions 1002–1011 are enriched in basic and acidic residues; the sequence is DESSSFHHLS. A compositionally biased stretch (low complexity) spans 1012–1028; it reads ESSNGNSSSWSSLGLEG. A compositionally biased stretch (polar residues) spans 1033–1042; the sequence is NNLSFPTSDS. Residues 1043–1056 are compositionally biased toward acidic residues; that stretch reads DGPDDRESEQEDGA.

Expressed in brain and testis.

Its subcellular location is the peroxisome. Its function is as follows. Binds to type II regulatory subunits of protein kinase A and anchors/targets them. The chain is A-kinase anchor protein 11 (Akap11) from Rattus norvegicus (Rat).